The sequence spans 580 residues: Efflux pump dotC (580 aa).

Positions 1–34 (MSEDHTKADNLSEKDPHSPERSDSSSHEDAHARE) are enriched in basic and acidic residues. The interval 1 to 45 (MSEDHTKADNLSEKDPHSPERSDSSSHEDAHAREEEESSDDDGAL) is disordered. N-linked (GlcNAc...) asparagine glycosylation occurs at Asn-10. Over residues 35–44 (EEESSDDDGA) the composition is skewed to acidic residues. The chain crosses the membrane as a helical span at residues 49-69 (PASLIAIVMIALSLAVFLSAL). Asn-86 carries an N-linked (GlcNAc...) asparagine glycan. 13 helical membrane-spanning segments follow: residues 89–109 (AAYT…TPIW), 127–147 (ALFM…MLIT), 153–173 (GAAG…LFSL), 181–201 (GMIG…GGAF), 209–229 (WCFY…FFFL), 242–262 (FAAI…MFLF), 275–295 (SATV…FGLV), 318–338 (ALLV…YLPL), 348–368 (PILA…SAAA), 380–400 (LIPM…LINF), 409–429 (LIIY…APLV), 444–466 (TATF…QVLY), and 519–539 (SPMW…ILLV). Residues 559-580 (KKAEAERKAERQAKDLEKAQKS) form a disordered region.

This sequence belongs to the major facilitator superfamily. TCR/Tet family.

The protein resides in the cell membrane. It is found in the vacuole membrane. In terms of biological role, efflux pump; part of the gene cluster that mediates the biosynthesis of dothistromin (DOTH), a polyketide toxin very similar in structure to the aflatoxin precursor, versicolorin B. One function of dotC may be to transport early-stage dothistromin biosynthetic intermediates from the cytoplasm into vacuoles, thereby affecting the rate of dothistromin production. In Dothistroma septosporum (strain NZE10 / CBS 128990) (Red band needle blight fungus), this protein is Efflux pump dotC.